The primary structure comprises 802 residues: DEAD-box ATP-dependent RNA helicase 28 (802 aa).

Residues 1–179 form a disordered region; that stretch reads MDADFRFDPD…TDKKSGVVDP (179 aa). 2 stretches are compositionally biased toward acidic residues: residues 76–131 and 138–169; these read GDSE…EELE and KSDE…EEEE. Coiled-coil stretches lie at residues 90 to 122 and 149 to 174; these read DSEE…GVEV and QDGE…DKKS. The Q motif motif lies at 194-222; sequence NSFLELNLSRPLLRACEALGYQKPTPIQA. The Helicase ATP-binding domain maps to 225-399; that stretch reads IPLALTGRDI…TLSLNKPVRL (175 aa). 238-245 serves as a coordination point for ATP; it reads AITGSGKT. The DEAD box signature appears at 347 to 350; it reads DEAD. One can recognise a Helicase C-terminal domain in the interval 429–573; the sequence is VLLALCLKTF…SRIVAEKPVA (145 aa). Residues 572–616 are a coiled coil; sequence VAECAKLIEELEDQISTIIQEEREERILRKAEMEATKAENMIAHK. The interval 639 to 802 is disordered; the sequence is KAAKESTSQG…KSKSRYNRRK (164 aa). Positions 644–659 are enriched in polar residues; that stretch reads STSQGKSNSGVISAQQ. The span at 666–684 shows a compositional bias: basic residues; the sequence is KEKKRREREKNLPRKKRRR. Positions 671 to 712 form a coiled coil; that stretch reads REREKNLPRKKRRRLEAEREMLEDESEDEEEAKESKGGKKEK. The span at 691–702 shows a compositional bias: acidic residues; it reads MLEDESEDEEEA. Basic residues predominate over residues 776 to 802; sequence RSLKKNNVMRKKSKNSFKSKSRYNRRK.

Belongs to the DEAD box helicase family. DDX27/DRS1 subfamily.

It catalyses the reaction ATP + H2O = ADP + phosphate + H(+). This is DEAD-box ATP-dependent RNA helicase 28 from Oryza sativa subsp. japonica (Rice).